Consider the following 133-residue polypeptide: Small ribosomal subunit protein uS9 (133 aa).

A disordered region spans residues 97–133 (MKQELKSQGFLTRDPRKKERKKYGRKKARKSFQFSKR). Positions 114 to 133 (KERKKYGRKKARKSFQFSKR) are enriched in basic residues.

This sequence belongs to the universal ribosomal protein uS9 family.

In Chlamydia muridarum (strain MoPn / Nigg), this protein is Small ribosomal subunit protein uS9 (rpsI).